The following is a 395-amino-acid chain: GDP-mannose 4,6 dehydratase (395 aa).

2 stretches are compositionally biased toward polar residues: residues 1–13 (MLNT…STSD) and 24–36 (ESSS…QNGT). The interval 1–44 (MLNTRLIAMSTSDGAPETKKQRPESSSNGSKDQNGTEAGAEGDS) is disordered. Residues 53–58 (GITGQD), 109–110 (DM), 131–135 (LAAQS), and tyrosine 146 each bind NADP(+). Residue threonine 178 is part of the active site. Catalysis depends on nucleophile residues glutamate 180 and tyrosine 202. Lysine 206, histidine 232, and arginine 237 together coordinate NADP(+).

This sequence belongs to the NAD(P)-dependent epimerase/dehydratase family. GDP-mannose 4,6-dehydratase subfamily. Requires NADP(+) as cofactor.

The enzyme catalyses GDP-alpha-D-mannose = GDP-4-dehydro-alpha-D-rhamnose + H2O. It functions in the pathway nucleotide-sugar biosynthesis; GDP-L-fucose biosynthesis via de novo pathway; GDP-L-fucose from GDP-alpha-D-mannose: step 1/2. Functionally, catalyzes the conversion of GDP-D-mannose to GDP-4-dehydro-6-deoxy-D-mannose (also known as GDP-4-keto-6-deoxy-D-mannose or GDP-4-dehydro-alpha-D-rhamnose), an essential step in the synthesis of GDP-fucose from GDP-mannose. In Drosophila melanogaster (Fruit fly), this protein is GDP-mannose 4,6 dehydratase (Gmd).